The following is a 66-amino-acid chain: DNA-directed RNA polymerase subunit omega (66 aa).

The protein belongs to the RNA polymerase subunit omega family. As to quaternary structure, the RNAP catalytic core consists of 2 alpha, 1 beta, 1 beta' and 1 omega subunit. When a sigma factor is associated with the core the holoenzyme is formed, which can initiate transcription.

It carries out the reaction RNA(n) + a ribonucleoside 5'-triphosphate = RNA(n+1) + diphosphate. Its function is as follows. Promotes RNA polymerase assembly. Latches the N- and C-terminal regions of the beta' subunit thereby facilitating its interaction with the beta and alpha subunits. This chain is DNA-directed RNA polymerase subunit omega, found in Bacillus licheniformis (strain ATCC 14580 / DSM 13 / JCM 2505 / CCUG 7422 / NBRC 12200 / NCIMB 9375 / NCTC 10341 / NRRL NRS-1264 / Gibson 46).